The sequence spans 410 residues: PHAF1 protein At3g51130 (410 aa).

The protein belongs to the PHAF1 family.

The chain is PHAF1 protein At3g51130 from Arabidopsis thaliana (Mouse-ear cress).